A 359-amino-acid chain; its full sequence is 3-dehydroquinate synthase (359 aa).

NAD(+) contacts are provided by residues 71 to 76 (DGEAYK), 105 to 109 (GVIGD), 129 to 130 (TT), Lys142, and Lys151. Residues Glu184, His247, and His264 each contribute to the Zn(2+) site.

The protein belongs to the sugar phosphate cyclases superfamily. Dehydroquinate synthase family. It depends on Co(2+) as a cofactor. Zn(2+) is required as a cofactor. NAD(+) serves as cofactor.

It is found in the cytoplasm. The enzyme catalyses 7-phospho-2-dehydro-3-deoxy-D-arabino-heptonate = 3-dehydroquinate + phosphate. Its pathway is metabolic intermediate biosynthesis; chorismate biosynthesis; chorismate from D-erythrose 4-phosphate and phosphoenolpyruvate: step 2/7. Functionally, catalyzes the conversion of 3-deoxy-D-arabino-heptulosonate 7-phosphate (DAHP) to dehydroquinate (DHQ). The polypeptide is 3-dehydroquinate synthase (Burkholderia ambifaria (strain MC40-6)).